We begin with the raw amino-acid sequence, 847 residues long: E4 SUMO-protein ligase PIAL1 (847 aa).

Residues 113-271 (VNSPVTLISQ…EVVGSNSDCD (159 aa)) form an interacting domain (IND), required for interaction with MOM1 and PIAL2 region. The SP-RING-type zinc-finger motif lies at 268–349 (SDCDIIEGPS…LRKILEEVGR (82 aa)). Cys299, His301, Cys322, and Cys325 together coordinate Zn(2+). 7 consecutive repeat copies span residues 569 to 591 (QRPV…ENAD), 592 to 614 (QRWM…GNTN), 615 to 637 (QRPI…GNTD), 638 to 659 (HRST…GNAD), 660 to 682 (QRPM…GYAH), 683 to 705 (QRPM…GTPD), and 706 to 728 (QRPM…GTTD). Residues 569 to 728 (QRPVPSYIAH…LPVSYGGTTD (160 aa)) are 7 X 23 AA approximate tandem repeats.

The protein belongs to the PIAL protein ligase family. Homodimer. Interacts with MOM1 and PIAL2 to form a high molecular mass complex which mediates transcriptional gene silencing at heterochromatin regions. As to expression, expressed in leaves, stems and flowers, and, at low levels, in siliques and old leaves.

The protein resides in the nucleus. It participates in protein modification; protein sumoylation. Its function is as follows. Together with MOM1 and PIAL2, regulates transcriptional gene silencing (TGS) independently of changes in DNA methylation. E4-type SUMO ligase that promotes SUMO chain formation in a SCE1-dependent manner and thus contributes to a pathway for proteolytic removal of sumoylation substrates. Involved in stress responses (e.g. osmotic, salt and abscisic acid ABA) and sulfur metabolism. This Arabidopsis thaliana (Mouse-ear cress) protein is E4 SUMO-protein ligase PIAL1.